Consider the following 359-residue polypeptide: Dihydroorotate dehydrogenase (quinone) (359 aa).

Residues 68–72 and Ala92 each bind FMN; that span reads AGFDK. Residue Lys72 coordinates substrate. A substrate-binding site is contributed by 117–121; sequence NAYGF. 2 residues coordinate FMN: Asn146 and Asn179. Position 179 (Asn179) interacts with substrate. Catalysis depends on Ser182, which acts as the Nucleophile. Residue Asn184 participates in substrate binding. Lys215 and Thr243 together coordinate FMN. 244–245 contacts substrate; that stretch reads NT. Residues Gly263, Gly292, and 313-314 each bind FMN; that span reads YT.

Belongs to the dihydroorotate dehydrogenase family. Type 2 subfamily. In terms of assembly, monomer. The cofactor is FMN.

Its subcellular location is the cell membrane. The catalysed reaction is (S)-dihydroorotate + a quinone = orotate + a quinol. It participates in pyrimidine metabolism; UMP biosynthesis via de novo pathway; orotate from (S)-dihydroorotate (quinone route): step 1/1. Catalyzes the conversion of dihydroorotate to orotate with quinone as electron acceptor. The polypeptide is Dihydroorotate dehydrogenase (quinone) (Nautilia profundicola (strain ATCC BAA-1463 / DSM 18972 / AmH)).